We begin with the raw amino-acid sequence, 73 residues long: Homeodomain-only protein (73 aa).

Positions 3–62 (AQTASGPTEDQVEILEYNFNKVNKHPDPTTLCLIAAEAGLTEEQTQKWFKQRLAEWRRSE) form a DNA-binding region, homeobox; degenerate.

Interacts with serum response factor (SRF). Component of a large complex containing histone deacetylases such as HDAC2. Interacts with the acetylated forms of HSPA1A and HSPA1B. Interacts with HSPA8. As to expression, expressed in the embryonic and adult heart and in the adult brain, liver, lung, skeletal muscle, intestine and spleen. Throughout embryonic and postnatal development, it is expressed in the myocardium.

The protein resides in the nucleus. Its subcellular location is the cytoplasm. Atypical homeodomain protein which does not bind DNA and is required to modulate cardiac growth and development. Acts via its interaction with SRF, thereby modulating the expression of SRF-dependent cardiac-specific genes and cardiac development. Prevents SRF-dependent transcription either by inhibiting SRF binding to DNA or by recruiting histone deacetylase (HDAC) proteins that prevent transcription by SRF. Overexpression causes cardiac hypertrophy. Acts as a co-chaperone for HSPA1A and HSPA1B chaperone proteins and assists in chaperone-mediated protein refolding. The polypeptide is Homeodomain-only protein (Hopx) (Mus musculus (Mouse)).